We begin with the raw amino-acid sequence, 467 residues long: Glutamate--tRNA ligase (467 aa).

Residues 9–19 (PSPTGYLHIGG) carry the 'HIGH' region motif. The 'KMSKS' region motif lies at 237 to 241 (KLSKR). Residue K240 participates in ATP binding.

This sequence belongs to the class-I aminoacyl-tRNA synthetase family. Glutamate--tRNA ligase type 1 subfamily. As to quaternary structure, monomer.

It localises to the cytoplasm. It carries out the reaction tRNA(Glu) + L-glutamate + ATP = L-glutamyl-tRNA(Glu) + AMP + diphosphate. Functionally, catalyzes the attachment of glutamate to tRNA(Glu) in a two-step reaction: glutamate is first activated by ATP to form Glu-AMP and then transferred to the acceptor end of tRNA(Glu). In Xylella fastidiosa (strain M12), this protein is Glutamate--tRNA ligase.